Here is a 258-residue protein sequence, read N- to C-terminus: Capsid protein (258 aa).

The Bipartite nuclear localization signal signature appears at 3 to 20; the sequence is KRPGDIIISTPGSKVRRR. Residues 41–55 carry the Nuclear localization signal motif; sequence RKRAWMNRPMYRKPM. Residues 69–86 fold into a zinc finger; the sequence is CEGPCKVQSFEQRDDVKH. Residues 102–123 carry the Nuclear export signal motif; it reads LTHRVGKRFCIKSIYILGKIWM. The Bipartite nuclear localization signal signature appears at 202-249; that stretch reads KRFYRLNHHVTYNHQEAGKYENHTENALLLYMACTHASNPVYATLKIR.

This sequence belongs to the geminiviridae capsid protein family. In terms of assembly, homomultimer. Binds to single-stranded and double-stranded viral DNA. Interacts (via nuclear localization signals) with host importin alpha-1a.

Its subcellular location is the virion. The protein localises to the host nucleus. Functionally, encapsidates the viral DNA into characteristic twinned ('geminate') particles. Binds the genomic viral ssDNA and shuttles it into and out of the cell nucleus. The CP of bipartite geminiviruses is not required for cell-to-cell or systemic movement. This is Capsid protein from Hewittia sublobata (Coralbush).